We begin with the raw amino-acid sequence, 301 residues long: Probable 5-dehydro-4-deoxyglucarate dehydratase (301 aa).

It belongs to the DapA family.

The catalysed reaction is 5-dehydro-4-deoxy-D-glucarate + H(+) = 2,5-dioxopentanoate + CO2 + H2O. The protein operates within carbohydrate acid metabolism; D-glucarate degradation; 2,5-dioxopentanoate from D-glucarate: step 2/2. The chain is Probable 5-dehydro-4-deoxyglucarate dehydratase from Cereibacter sphaeroides (strain ATCC 17023 / DSM 158 / JCM 6121 / CCUG 31486 / LMG 2827 / NBRC 12203 / NCIMB 8253 / ATH 2.4.1.) (Rhodobacter sphaeroides).